A 448-amino-acid chain; its full sequence is Probable glycine dehydrogenase (decarboxylating) subunit 1 (448 aa).

It belongs to the GcvP family. N-terminal subunit subfamily. In terms of assembly, the glycine cleavage system is composed of four proteins: P, T, L and H. In this organism, the P 'protein' is a heterodimer of two subunits.

It catalyses the reaction N(6)-[(R)-lipoyl]-L-lysyl-[glycine-cleavage complex H protein] + glycine + H(+) = N(6)-[(R)-S(8)-aminomethyldihydrolipoyl]-L-lysyl-[glycine-cleavage complex H protein] + CO2. The glycine cleavage system catalyzes the degradation of glycine. The P protein binds the alpha-amino group of glycine through its pyridoxal phosphate cofactor; CO(2) is released and the remaining methylamine moiety is then transferred to the lipoamide cofactor of the H protein. The chain is Probable glycine dehydrogenase (decarboxylating) subunit 1 from Listeria monocytogenes serotype 4a (strain HCC23).